A 261-amino-acid polypeptide reads, in one-letter code: tRNA pseudouridine synthase A (261 aa).

Asp-53 (nucleophile) is an active-site residue. Position 111 (Tyr-111) interacts with substrate.

It belongs to the tRNA pseudouridine synthase TruA family. Homodimer.

The enzyme catalyses uridine(38/39/40) in tRNA = pseudouridine(38/39/40) in tRNA. Functionally, formation of pseudouridine at positions 38, 39 and 40 in the anticodon stem and loop of transfer RNAs. This is tRNA pseudouridine synthase A from Shouchella clausii (strain KSM-K16) (Alkalihalobacillus clausii).